The sequence spans 368 residues: Cytochrome-c peroxidase IdrP2 (368 aa).

A signal peptide spans 1–27 (MKWHRGRLTQTLGAMGLTATLTVAAQA). Cytochrome c domains lie at 48 to 158 (AMIE…ALWQ) and 201 to 346 (KEAQ…LTLS). The heme c site is built by cysteine 70, cysteine 73, histidine 74, cysteine 216, cysteine 219, and histidine 220.

The iodate reductase (Idr) complex is composed of a molybdopterin-dependent iodate reductase (IdrA and IdrB subunits) and two associated peroxidases (IdrP1 and IdrP2). Heme c serves as cofactor.

The protein localises to the periplasm. It catalyses the reaction 2 Fe(II)-[cytochrome c] + H2O2 + 2 H(+) = 2 Fe(III)-[cytochrome c] + 2 H2O. In terms of biological role, involved in iodate respiration. Probably reduces the H(2)O(2) produced by IdrA/IdrB to H(2)O, using a reduced cytochrome c as the electron donor. The chain is Cytochrome-c peroxidase IdrP2 from Pseudomonas sp. (strain SCT).